A 364-amino-acid polypeptide reads, in one-letter code: Ferrochelatase (364 aa).

2 residues coordinate Fe cation: histidine 213 and glutamate 294.

This sequence belongs to the ferrochelatase family.

The protein localises to the cytoplasm. It catalyses the reaction heme b + 2 H(+) = protoporphyrin IX + Fe(2+). It participates in porphyrin-containing compound metabolism; protoheme biosynthesis; protoheme from protoporphyrin-IX: step 1/1. In terms of biological role, catalyzes the ferrous insertion into protoporphyrin IX. In Chromobacterium violaceum (strain ATCC 12472 / DSM 30191 / JCM 1249 / CCUG 213 / NBRC 12614 / NCIMB 9131 / NCTC 9757 / MK), this protein is Ferrochelatase.